The sequence spans 402 residues: UPF0261 protein mll9388 (402 aa).

Belongs to the UPF0261 family.

This Mesorhizobium japonicum (strain LMG 29417 / CECT 9101 / MAFF 303099) (Mesorhizobium loti (strain MAFF 303099)) protein is UPF0261 protein mll9388.